Reading from the N-terminus, the 524-residue chain is Serine/threonine-protein kinase PAK 2 (524 aa).

The tract at residues 1 to 81 is disordered; sequence MSDNGELEDK…PEISPPSDFE (81 aa). An N-acetylserine modification is found at serine 2. 4 positions are modified to phosphoserine: serine 2, serine 20, serine 55, and serine 58. A Phosphothreonine modification is found at threonine 60. Position 62 is an N6-acetyllysine (lysine 62). Serine 64 bears the Phosphoserine mark. The span at 67–81 shows a compositional bias: basic and acidic residues; that stretch reads KEKERPEISPPSDFE. The segment at 69–112 is GTPase-binding; sequence KERPEISPPSDFEHTIHVGFDAVTGEFTGMPEQWARLLQTSNIT. The autoregulatory region stretch occupies residues 69–137; it reads KERPEISPPS…KFYDSNTVKQ (69 aa). One can recognise a CRIB domain in the interval 74–87; it reads ISPPSDFEHTIHVG. N6-acetyllysine is present on lysine 128. Threonine 134 is modified (phosphothreonine). Position 139 is a phosphotyrosine (tyrosine 139). At serine 141 the chain carries Phosphoserine. Threonine 143 carries the post-translational modification Phosphothreonine. 2 disordered regions span residues 143–164 and 169–188; these read TPPEKDGFPSGTPALNAKGTEA and TEEEDDDEETAPPVIAPRPD. Serine 152 carries the post-translational modification Phosphoserine. Phosphothreonine occurs at positions 154 and 169. The segment covering 169–178 has biased composition (acidic residues); that stretch reads TEEEDDDEET. Serine 197 carries the phosphoserine modification. A lipid anchor (N-myristoyl glycine; in form PAK-2p34) is attached at glycine 213. The short motif at 245-251 is the Nuclear localization signal element; sequence PKKKYTR. The region spanning 249-499 is the Protein kinase domain; it reads YTRYEKIGQG…SAKELLQHPF (251 aa). ATP is bound by residues 255-263 and lysine 278; that span reads IGQGASGTV. The active-site Proton acceptor is the arginine 367. A Phosphothreonine; by autocatalysis modification is found at threonine 402.

The protein belongs to the protein kinase superfamily. STE Ser/Thr protein kinase family. STE20 subfamily. In terms of assembly, interacts tightly with GTP-bound but not GDP-bound CDC42/p21 and RAC1. Interacts with SH3MD4. Interacts with SCRIB. Interacts with ARHGEF7 and GIT1. PAK-2p34 interacts with ARHGAP10. As to quaternary structure, (Microbial infection) Interacts with and activated by HIV-1 Nef. Post-translationally, full-length PAK2 is autophosphorylated when activated by CDC42/p21. Following cleavage, both peptides, PAK-2p27 and PAK-2p34, become highly autophosphorylated, with PAK-2p27 being phosphorylated on serine and PAK-2p34 on threonine residues, respectively. Autophosphorylation of PAK-2p27 can occur in the absence of any effectors and is dependent on phosphorylation of Thr-402, because PAK-2p27 is acting as an exogenous substrate. In terms of processing, during apoptosis proteolytically cleaved by caspase-3 or caspase-3-like proteases to yield active PAK-2p34. Ubiquitinated, leading to its proteasomal degradation. Post-translationally, PAK-2p34 is myristoylated. As to expression, ubiquitously expressed. Higher levels seen in skeletal muscle, ovary, thymus and spleen.

The protein localises to the cytoplasm. It is found in the nucleus. It localises to the perinuclear region. The protein resides in the membrane. It catalyses the reaction L-seryl-[protein] + ATP = O-phospho-L-seryl-[protein] + ADP + H(+). The enzyme catalyses L-threonyl-[protein] + ATP = O-phospho-L-threonyl-[protein] + ADP + H(+). Activated by binding small G proteins. Binding of GTP-bound CDC42 or RAC1 to the autoregulatory region releases monomers from the autoinhibited dimer, enables phosphorylation of Thr-402 and allows the kinase domain to adopt an active structure. Following caspase cleavage, autophosphorylated PAK-2p34 is constitutively active. Its function is as follows. Serine/threonine protein kinase that plays a role in a variety of different signaling pathways including cytoskeleton regulation, cell motility, cell cycle progression, apoptosis or proliferation. Acts as a downstream effector of the small GTPases CDC42 and RAC1. Activation by the binding of active CDC42 and RAC1 results in a conformational change and a subsequent autophosphorylation on several serine and/or threonine residues. Full-length PAK2 stimulates cell survival and cell growth. Phosphorylates MAPK4 and MAPK6 and activates the downstream target MAPKAPK5, a regulator of F-actin polymerization and cell migration. Phosphorylates JUN and plays an important role in EGF-induced cell proliferation. Phosphorylates many other substrates including histone H4 to promote assembly of H3.3 and H4 into nucleosomes, BAD, ribosomal protein S6, or MBP. Phosphorylates CASP7, thereby preventing its activity. Additionally, associates with ARHGEF7 and GIT1 to perform kinase-independent functions such as spindle orientation control during mitosis. On the other hand, apoptotic stimuli such as DNA damage lead to caspase-mediated cleavage of PAK2, generating PAK-2p34, an active p34 fragment that translocates to the nucleus and promotes cellular apoptosis involving the JNK signaling pathway. Caspase-activated PAK2 phosphorylates MKNK1 and reduces cellular translation. The protein is Serine/threonine-protein kinase PAK 2 (PAK2) of Homo sapiens (Human).